We begin with the raw amino-acid sequence, 854 residues long: Probable disease resistance protein At1g51480 (854 aa).

A coiled-coil region spans residues 25–62 (RNYIHKMEANLDDLHTTMEELKNGRDDLLRRVSIEEDK). The NB-ARC domain maps to 138–441 (AHKIPVPKVE…CEGYINPNRY (304 aa)). 180 to 187 (GMGGVGKT) contributes to the ATP binding site. LRR repeat units lie at residues 514–535 (IVRQ…SKCS), 536–557 (NLST…FFLF), 560–582 (KLVV…ISNL), 584–605 (SLQY…MKKL), 607–629 (KLIY…SATL), and 631–652 (NLQV…MEEL).

It belongs to the disease resistance NB-LRR family.

Probable disease resistance protein. The chain is Probable disease resistance protein At1g51480 from Arabidopsis thaliana (Mouse-ear cress).